A 514-amino-acid chain; its full sequence is Myocyte-specific enhancer factor 2D (514 aa).

The region spanning 3 to 57 (RKKIQIQRITDERNRQVTFTKRKFGLMKKAYELSVLCDCEIALIIFNHSNKLFQY) is the MADS-box domain. The segment at residues 58-86 (ASTDMDKVLLKYTEYNEPHESRTNADIIE) is a DNA-binding region (mef2-type). 3 positions are modified to phosphoserine: aspartate 97, serine 98, and serine 106. The residue at position 107 (leucine 107) is a Phosphothreonine. Serine 110 is modified (phosphoserine). Serine 121 is modified (phosphoserine; by PKA). The tract at residues 174–207 (TDPRLLSPQQPALQRNSVSPGLPQRPASAGAMLG) is disordered. Phosphoserine; by MAPK7 is present on serine 180. A compositionally biased stretch (polar residues) spans 180–192 (SPQQPALQRNSVS). Serine 190 bears the Phosphoserine; by PKA mark. Position 231 is a phosphoserine (serine 231). The tract at residues 244–269 (NKVIPAKSPPPPTHNTQLGAPSRKPD) is disordered. Lysine 245 is subject to N6-acetyllysine. Position 251 is a phosphoserine (serine 251). Residues 286–292 (TEDHLDL) are beta domain. 2 disordered regions span residues 364 to 399 (WQQPQPPQQPQPPQPPQSQPQPPQPQPQQPPQQQPH) and 430 to 514 (SIKS…WTLK). The span at 367-396 (PQPPQQPQPPQPPQSQPQPPQPQPQQPPQQ) shows a compositional bias: pro residues. Residue lysine 432 is modified to N6-acetyllysine; alternate. Lysine 432 participates in a covalent cross-link: Glycyl lysine isopeptide (Lys-Gly) (interchain with G-Cter in SUMO); alternate. Position 437 is a phosphoserine (serine 437).

Belongs to the MEF2 family. Forms a complex with class II HDACs in undifferentiating cells. On myogenic differentiation, HDACs are released into the cytoplasm allowing MEF2s to interact with other proteins for activation. Interacts with HDAC4 (in undifferentiating cells); the interaction translocates MEF2D to nuclear dots. Forms a heterodimer with MEF2A. Interacts with MAPK7; the interaction phosphorylates but does not activate MEF2D. Interacts with MYOG. Interacts with CCAR2 and HDAC3. In terms of processing, phosphorylated on Ser-437 is which is required for Lys-432 sumoylation and inhibits transcriptional activity. Phosphorylation on this residue by CDK5 is dependent on p35 and calpains. Phosphorylated by PKA at Ser-121 and Ser-190 represses transcriptional activity in embryonic and postnatal skeletal muscle, and stabilizes protein levels. No in vitro phosphorylation by PKA on Thr-20. Phosphorylated and activated by CaMK4. Post-translationally, acetylated on Lys-432 by CREBBP. Acetylated by EP300. Deacetylated by SIRT1 and HDAC3. Sumoylated on Lys-432 with SUMO2 but not SUMO1; which inhibits transcriptional activity and myogenic activity. Desumoylated by SENP3. In terms of processing, proteolytically cleaved in cerebellar granule neurons by caspase 7 following neurotoxicity. Preferentially cleaves the CDK5-mediated hyperphosphorylated form which leads to neuron apoptosis and transcriptional inactivation. In terms of tissue distribution, widely expressed though mainly restricted to skeletal and cardiac muscle, brain, neurons and lymphocytes. Differentially expressed depending on if isoforms contain the beta domain or not, with the total expression of the beta domain-lacking isoforms vastly exceeding that of the beta domain-containing isoforms. Isoforms containing the beta domain are expressed primarily in skeletal and cardiac muscle and in brain. Also present in lung and testis. Splicing to include the beta domain is induced in differentiating myocytes. Isoforms lacking the beta domain are expressed less abundantly in skeletal muscle, brain and lymphocytes, and are uniquely found in ovary, liver, spleen and kidney. In embryos, the beta domain-containing and beta domain-lacking isoforms are equally expressed. Also expressed cerebellar granule neurons and other regions of the CNS. Highest levels in the olfactory bulb, cortex, hippocampus, thalamus and cerebellum.

Its subcellular location is the nucleus. In terms of biological role, transcriptional activator which binds specifically to the MEF2 element, 5'-YTA[AT](4)TAR-3', found in numerous muscle-specific, growth factor- and stress-induced genes. Mediates cellular functions not only in skeletal and cardiac muscle development, but also in neuronal differentiation and survival. Plays diverse roles in the control of cell growth, survival and apoptosis via p38 MAPK signaling in muscle-specific and/or growth factor-related transcription. Plays a critical role in the regulation of neuronal apoptosis. In Mus musculus (Mouse), this protein is Myocyte-specific enhancer factor 2D (Mef2d).